A 590-amino-acid chain; its full sequence is UvrABC system protein C (590 aa).

Residues 15–98 (AEPGVYQFVA…VKRHQPRYNV (84 aa)) enclose the GIY-YIG domain. In terms of domain architecture, UVR spans 207 to 242 (GALADPLRREMAAAAQAEAFERAANLRDRLAVVEGF).

The protein belongs to the UvrC family. Interacts with UvrB in an incision complex.

It localises to the cytoplasm. The UvrABC repair system catalyzes the recognition and processing of DNA lesions. UvrC both incises the 5' and 3' sides of the lesion. The N-terminal half is responsible for the 3' incision and the C-terminal half is responsible for the 5' incision. This is UvrABC system protein C from Halobacterium salinarum (strain ATCC 29341 / DSM 671 / R1).